The sequence spans 343 residues: Heat-inducible transcription repressor HrcA (343 aa).

Belongs to the HrcA family.

Negative regulator of class I heat shock genes (grpE-dnaK-dnaJ and groELS operons). Prevents heat-shock induction of these operons. This Phytoplasma mali (strain AT) protein is Heat-inducible transcription repressor HrcA.